We begin with the raw amino-acid sequence, 81 residues long: Cytotoxin 8 (81 aa).

Residues 1–21 (MKTLLLTLVVVTIVCLDLGYT) form the signal peptide. 4 disulfides stabilise this stretch: cysteine 24–cysteine 42, cysteine 35–cysteine 59, cysteine 63–cysteine 74, and cysteine 75–cysteine 80.

This sequence belongs to the three-finger toxin family. Short-chain subfamily. Type IA cytotoxin sub-subfamily. As to quaternary structure, monomer in solution; Homodimer and oligomer in the presence of negatively charged lipids forming a pore with a size ranging between 20 and 30 Angstroms. Expressed by the venom gland.

The protein localises to the secreted. It is found in the target cell membrane. In terms of biological role, shows cytolytic activity on many different cells by forming pore in lipid membranes. In vivo, increases heart rate or kills the animal by cardiac arrest. In addition, it binds to heparin with high affinity, interacts with Kv channel-interacting protein 1 (KCNIP1) in a calcium-independent manner, and binds to integrin alpha-V/beta-3 (ITGAV/ITGB3) with moderate affinity. The polypeptide is Cytotoxin 8 (Naja atra (Chinese cobra)).